The sequence spans 281 residues: MSDNYVLVDPLSSKPIDCWKKYVKQGRVCEPIKPMRLDTPIFENKVRFVCISDTHEKLHEILPYIPDGDVLIHSGDFTNCGDIGEVIKFNAEIGSLPHKHKIVIAGNHELGFEDGEEMSERQLAGLNMLGINKAYELLSNCTYLCDKSYEAYGLKIYGAPWHSMPGYSFFRQRGQKILHKWNQIPAKIDVLMTHTPPLGHGDFNAWDKMDGILCGCAELLNTVEQRVKPKYHVFGHVHQKHGVTTNGETTFINAALCDHKLRSAYDPIIFDIPLPPGKTKQ.

Belongs to the UPF0046 family.

The sequence is that of UPF0046 protein C25E10.12 from Caenorhabditis elegans.